Here is a 348-residue protein sequence, read N- to C-terminus: Oxygen-dependent coproporphyrinogen-III oxidase (348 aa).

Ser-104 contacts substrate. The a divalent metal cation site is built by His-108 and His-118. His-118 (proton donor) is an active-site residue. 120 to 122 (NYR) is a substrate binding site. His-152 and His-182 together coordinate a divalent metal cation. The important for dimerization stretch occupies residues 272–307 (YAEFNLVWDRGTIFGLQTNGRTESILMSLPPLARWE).

This sequence belongs to the aerobic coproporphyrinogen-III oxidase family. As to quaternary structure, homodimer. A divalent metal cation is required as a cofactor.

It is found in the cytoplasm. The catalysed reaction is coproporphyrinogen III + O2 + 2 H(+) = protoporphyrinogen IX + 2 CO2 + 2 H2O. It participates in porphyrin-containing compound metabolism; protoporphyrin-IX biosynthesis; protoporphyrinogen-IX from coproporphyrinogen-III (O2 route): step 1/1. Its function is as follows. Involved in the heme and chlorophyll biosynthesis. Catalyzes the aerobic oxidative decarboxylation of propionate groups of rings A and B of coproporphyrinogen-III to yield the vinyl groups in protoporphyrinogen-IX. The polypeptide is Oxygen-dependent coproporphyrinogen-III oxidase (Prochlorococcus marinus (strain NATL1A)).